The sequence spans 193 residues: Interleukin-18 (193 aa).

A propeptide spanning residues 1-36 (MAAEQVEDYCISFVEMKFINNTLYFVAENDEDLESD) is cleaved from the precursor.

Belongs to the IL-1 family. Forms a ternary complex with ligand-binding receptor subunit IL18R1 and signaling receptor subunit IL18RAP at the plasma membrane. Mature IL18 first binds to IL18R1 forming a low affinity binary complex, which then interacts with IL18RAP to form a high affinity ternary complex that signals inside the cell. Interacts with cargo receptor TMED10; the interaction mediates the translocation from the cytoplasm into the ERGIC (endoplasmic reticulum-Golgi intermediate compartment) and thereby secretion. Post-translationally, the pro-IL-18 precursor is processed by CASP1, CASP4 or CASP5 to yield its mature, active form. The pro-IL-18 precursor features autoinhibitory interactions between the propeptide and the post-cleavage-site region, preventing recognition by the IL18R1 receptor. Processing by CASP1, CASP4 or CASP5 induces conformational changes to generate critical receptor-binding sites. The mature form is then secreted and released in the extracellular milieu by passing through the gasdermin-D (GSDMD) pore. In contrast, cleavage by CASP3 inactivates IL18.

The protein localises to the cytoplasm. Its subcellular location is the cytosol. It localises to the secreted. Its function is as follows. Pro-inflammatory cytokine primarily involved in epithelial barrier repair, polarized T-helper 1 (Th1) cell and natural killer (NK) cell immune responses. Upon binding to IL18R1 and IL18RAP, forms a signaling ternary complex which activates NF-kappa-B, triggering synthesis of inflammatory mediators. Synergizes with IL12/interleukin-12 to induce IFNG synthesis from T-helper 1 (Th1) cells and natural killer (NK) cells. Involved in transduction of inflammation downstream of pyroptosis: its mature form is specifically released in the extracellular milieu by passing through the gasdermin-D (GSDMD) pore. This Bos taurus (Bovine) protein is Interleukin-18 (IL18).